The sequence spans 562 residues: Putative transport protein ECA2683 (562 aa).

The next 6 membrane-spanning stretches (helical) occupy residues 8-28, 32-52, 66-86, 93-113, 116-136, and 158-178; these read LLNGNYILLLFVVLSLGLCLG, LGPVQLGNSIGVLVVSLLLGQ, FMLFIFCVGVEAGPNFFSIFF, FMLALVMVGSAMLLALGLGKL, WGIGLTAGMLAGSMTSTPVLV, and HLSLGYALTYLVGLVSLIFGA. 2 RCK C-terminal domains span residues 202–288 and 290–373; these read LDVD…NFRD and KEVF…RIGF. 5 consecutive transmembrane segments (helical) span residues 383-403, 406-426, 447-467, 478-498, and 537-557; these read LLAFCAFFVIGVMVGLITIQF, FTFGIGNAAGLLFAGIMLGFL, FGLMVFMAGVGLSAGSTINSS, SGLIVSLVPVVICFLFGAYVL, and GTYAIANVLLTLAGSLIVVIW.

It belongs to the AAE transporter (TC 2.A.81) family. YbjL subfamily.

The protein localises to the cell membrane. In Pectobacterium atrosepticum (strain SCRI 1043 / ATCC BAA-672) (Erwinia carotovora subsp. atroseptica), this protein is Putative transport protein ECA2683.